Here is a 335-residue protein sequence, read N- to C-terminus: Ketol-acid reductoisomerase (NADP(+)) (335 aa).

The 181-residue stretch at 5-185 folds into the KARI N-terminal Rossmann domain; sequence SKIYTDKDSN…GATRAGVIPT (181 aa). Residues 28–31, S56, and 86–89 contribute to the NADP(+) site; these read YGSQ and DMVQ. H111 is an active-site residue. G137 lines the NADP(+) pocket. The KARI C-terminal knotted domain maps to 186–331; it reads TFKEETETDL…NQLKDLIQKG (146 aa). Residues D194, E198, E230, and E234 each coordinate Mg(2+). S255 serves as a coordination point for substrate.

The protein belongs to the ketol-acid reductoisomerase family. Mg(2+) serves as cofactor.

It carries out the reaction (2R)-2,3-dihydroxy-3-methylbutanoate + NADP(+) = (2S)-2-acetolactate + NADPH + H(+). The enzyme catalyses (2R,3R)-2,3-dihydroxy-3-methylpentanoate + NADP(+) = (S)-2-ethyl-2-hydroxy-3-oxobutanoate + NADPH + H(+). The protein operates within amino-acid biosynthesis; L-isoleucine biosynthesis; L-isoleucine from 2-oxobutanoate: step 2/4. Its pathway is amino-acid biosynthesis; L-valine biosynthesis; L-valine from pyruvate: step 2/4. In terms of biological role, involved in the biosynthesis of branched-chain amino acids (BCAA). Catalyzes an alkyl-migration followed by a ketol-acid reduction of (S)-2-acetolactate (S2AL) to yield (R)-2,3-dihydroxy-isovalerate. In the isomerase reaction, S2AL is rearranged via a Mg-dependent methyl migration to produce 3-hydroxy-3-methyl-2-ketobutyrate (HMKB). In the reductase reaction, this 2-ketoacid undergoes a metal-dependent reduction by NADPH to yield (R)-2,3-dihydroxy-isovalerate. In Saccharolobus islandicus (strain M.16.27) (Sulfolobus islandicus), this protein is Ketol-acid reductoisomerase (NADP(+)).